A 247-amino-acid polypeptide reads, in one-letter code: V-type proton ATPase subunit D (247 aa).

This sequence belongs to the V-ATPase D subunit family. As to quaternary structure, V-ATPase is a heteromultimeric enzyme made up of two complexes: the ATP-hydrolytic V1 complex and the proton translocation V0 complex. The V1 complex consists of three catalytic AB heterodimers that form a heterohexamer, three peripheral stalks each consisting of EG heterodimers, one central rotor including subunits D and F, and the regulatory subunits C and H. The proton translocation complex V0 consists of the proton transport subunit a, a ring of proteolipid subunits c9c'', rotary subunit d, subunits e and f, and the accessory subunits ATP6AP1/Ac45 and ATP6AP2/PRR. Interacts with SNX10.

The protein localises to the membrane. Its subcellular location is the cytoplasmic vesicle. It is found in the clathrin-coated vesicle membrane. The protein resides in the cytoplasm. It localises to the cytoskeleton. The protein localises to the microtubule organizing center. Its subcellular location is the centrosome. It is found in the cell projection. The protein resides in the cilium. Subunit of the V1 complex of vacuolar(H+)-ATPase (V-ATPase), a multisubunit enzyme composed of a peripheral complex (V1) that hydrolyzes ATP and a membrane integral complex (V0) that translocates protons. V-ATPase is responsible for acidifying and maintaining the pH of intracellular compartments and in some cell types, is targeted to the plasma membrane, where it is responsible for acidifying the extracellular environment. May play a role in cilium biogenesis through regulation of the transport and the localization of proteins to the cilium. This chain is V-type proton ATPase subunit D (ATP6V1D), found in Homo sapiens (Human).